Consider the following 1072-residue polypeptide: Carbamoyl phosphate synthase large chain (1072 aa).

A carboxyphosphate synthetic domain region spans residues 1 to 401 (MPKYKDISKV…SLLKAVRSLE (401 aa)). Residues R129, R169, G175, G176, K208, L210, E215, G241, V242, H243, Q284, and E298 each coordinate ATP. The 195-residue stretch at 133-327 (KRKMQEIGEP…IAKIAAKIAI (195 aa)) folds into the ATP-grasp 1 domain. Positions 284, 298, and 300 each coordinate Mg(2+). Q284, E298, and N300 together coordinate Mn(2+). Residues 402 to 544 (IKAYGLRLDS…YIYSTYCEED (143 aa)) are oligomerization domain. Residues 545–929 (EVETHDIPKV…ALYKALEGAG (385 aa)) form a carbamoyl phosphate synthetic domain region. The region spanning 671–861 (SKLLKELNIN…MVKLAVEVAL (191 aa)) is the ATP-grasp 2 domain. ATP contacts are provided by R707, K746, I748, E752, G777, V778, H779, S780, Q820, and E832. 3 residues coordinate Mg(2+): Q820, E832, and N834. 3 residues coordinate Mn(2+): Q820, E832, and N834. The MGS-like domain maps to 930-1072 (LKIPKKGKIL…QKDNVKNLVL (143 aa)). The interval 930 to 1072 (LKIPKKGKIL…QKDNVKNLVL (143 aa)) is allosteric domain.

This sequence belongs to the CarB family. In terms of assembly, composed of two chains; the small (or glutamine) chain promotes the hydrolysis of glutamine to ammonia, which is used by the large (or ammonia) chain to synthesize carbamoyl phosphate. Tetramer of heterodimers (alpha,beta)4. Mg(2+) serves as cofactor. Mn(2+) is required as a cofactor.

It carries out the reaction hydrogencarbonate + L-glutamine + 2 ATP + H2O = carbamoyl phosphate + L-glutamate + 2 ADP + phosphate + 2 H(+). The enzyme catalyses hydrogencarbonate + NH4(+) + 2 ATP = carbamoyl phosphate + 2 ADP + phosphate + 2 H(+). The protein operates within amino-acid biosynthesis; L-arginine biosynthesis; carbamoyl phosphate from bicarbonate: step 1/1. Its pathway is pyrimidine metabolism; UMP biosynthesis via de novo pathway; (S)-dihydroorotate from bicarbonate: step 1/3. Large subunit of the glutamine-dependent carbamoyl phosphate synthetase (CPSase). CPSase catalyzes the formation of carbamoyl phosphate from the ammonia moiety of glutamine, carbonate, and phosphate donated by ATP, constituting the first step of 2 biosynthetic pathways, one leading to arginine and/or urea and the other to pyrimidine nucleotides. The large subunit (synthetase) binds the substrates ammonia (free or transferred from glutamine from the small subunit), hydrogencarbonate and ATP and carries out an ATP-coupled ligase reaction, activating hydrogencarbonate by forming carboxy phosphate which reacts with ammonia to form carbamoyl phosphate. This Caldanaerobacter subterraneus subsp. tengcongensis (strain DSM 15242 / JCM 11007 / NBRC 100824 / MB4) (Thermoanaerobacter tengcongensis) protein is Carbamoyl phosphate synthase large chain.